Consider the following 103-residue polypeptide: N(4)-acetylcytidine amidohydrolase (103 aa).

An ASCH domain is found at 6–94 (ITFFQRFQND…IAEIYPNQTQ (89 aa)). Lysine 21 functions as the Proton acceptor in the catalytic mechanism. Threonine 24 serves as the catalytic Nucleophile. Residue glutamate 74 is the Proton donor of the active site.

This sequence belongs to the N(4)-acetylcytidine amidohydrolase family.

The catalysed reaction is N(4)-acetylcytidine + H2O = cytidine + acetate + H(+). It carries out the reaction N(4)-acetyl-2'-deoxycytidine + H2O = 2'-deoxycytidine + acetate + H(+). The enzyme catalyses N(4)-acetylcytosine + H2O = cytosine + acetate + H(+). Its function is as follows. Catalyzes the hydrolysis of N(4)-acetylcytidine (ac4C). This Salmonella heidelberg (strain SL476) protein is N(4)-acetylcytidine amidohydrolase (yqfB).